A 374-amino-acid chain; its full sequence is Cell wall integrity and stress response component 1 (374 aa).

An N-terminal signal peptide occupies residues 1 to 29 (MVFLNSSPFKGRLLFFVYLLIISTRLVAA). Residues 30-292 (DMNTQYGCYL…SNHTSLNAGA (263 aa)) lie on the Extracellular side of the membrane. Positions 31–119 (MNTQYGCYLV…DLYWSVYLTG (89 aa)) constitute a WSC domain. Positions 132-236 (VSSTTSSSSS…SSSSSSRPSS (105 aa)) are disordered. N-linked (GlcNAc...) asparagine glycosylation is found at N278 and N284. A helical membrane pass occupies residues 293-313 (IVGIVIGCVAFAVVMALCIFL). Residues 314-374 (YFYFRRFKIR…RKILRVTNLN (61 aa)) are Cytoplasmic-facing. Phosphoserine is present on S354.

O-mannosylated.

It is found in the membrane. The chain is Cell wall integrity and stress response component 1 (wsc1) from Schizosaccharomyces pombe (strain 972 / ATCC 24843) (Fission yeast).